Consider the following 810-residue polypeptide: MSRFFATNYNYDETSSSSEEDLLSSSEELLSSSEEGELSDDSLFNDESESESDFDSDDSDAKPYGPDWFKKPEFRKGGNKFLKGASYSDSDESDEEDGKKVVKSAREKLLDEMQAVYDKIETAEMSDDWMTILNEFDSITRLLVRAQQQNFGIPKIFVKVVAQVEDLVSNSEQTEIKNKAVSKAFNTTKQRVKKIARENEALLAKFREDPQSFDKEDTVEPELPPLNEENKVFTGKGVNLSSLASASSEFSFMASLQIVNDSRGKKNSNQAELIKTLEELLNIAKTPYERILAYLTLIPTRLEESTNLSYQPIDQWKSTHDDLNKLFDILDENISSYQVTELAARNDDLETEPEPNANGIREILGSLLSFTERLDDEFKKSLLNIDPHSSDYLERLRDEQNMYNLLLRTQLYMEATIPEERQEQLLARAFVRRLDHIYYKSNKLISIIENSAWKAVPSSYKSKYIPFSGNADEEYCSQLVEGLSKSLANQDNVFLQKRATLSHIYYTALNGEFEVAKELLLKTKVQSNINKSDPSLQILFNRVVVQLGLSAFKLCKIEECHQILNELLASSHLREILGQQSLQRIASNSSSSSSSEDREKQCLPYHQHINLDLVDLVFMTSSLLIEIPQMTAYLTGIKTKKVPVYQKSVRRLVESFDKSFFHGPPESIKEHVLYAAKSMQKGDWKGCLEYLKSVKTWNLLPNSVEVLDNLTERIQIETMKTYVFTYRRFYEKISIKKFSELFSLPEDKIVTTMEKVIADLELNIKLDDNKTYIVIEKGDEVSKLEEVAVKLNKEIRATRERLNPSHHNHR.

Positions 1–11 (MSRFFATNYNY) are enriched in polar residues. Residues 1-98 (MSRFFATNYN…DSDESDEEDG (98 aa)) are disordered. The segment covering 12–33 (DETSSSSEEDLLSSSEELLSSS) has biased composition (low complexity). The segment covering 34 to 58 (EEGELSDDSLFNDESESESDFDSDD) has biased composition (acidic residues). A PCI domain is found at 605–780 (YHQHINLDLV…TYIVIEKGDE (176 aa)).

Belongs to the eIF-3 subunit C family. Component of the eukaryotic translation initiation factor 3 (eIF-3) complex.

It is found in the cytoplasm. Functionally, component of the eukaryotic translation initiation factor 3 (eIF-3) complex, which is involved in protein synthesis of a specialized repertoire of mRNAs and, together with other initiation factors, stimulates binding of mRNA and methionyl-tRNAi to the 40S ribosome. The eIF-3 complex specifically targets and initiates translation of a subset of mRNAs involved in cell proliferation. The chain is Eukaryotic translation initiation factor 3 subunit C from Candida glabrata (strain ATCC 2001 / BCRC 20586 / JCM 3761 / NBRC 0622 / NRRL Y-65 / CBS 138) (Yeast).